We begin with the raw amino-acid sequence, 346 residues long: MNIDTREITLEPADNARLLSLCGPFDDNIKQLERRLGIEINRRDNHFKLTGRPICVTAAADILRSLYVDTAPMRGQIQDIEPEQIHLAIKEARVLEQSAESVPEYGKAVNIKTKRGVIKPRTPNQAQYIANILDHDITFGVGPAGTGKTYLAVAAAVDALERQEIRRILLTRPAVEAGEKLGFLPGDLSQKVDPYLRPLYDALFEMLGFEKVEKLIERNVIEVAPLAYMRGRTLNDAFIILDESQNTTIEQMKMFLTRIGFNSKAVITGDVTQIDLPRNTKSGLRHAIEVLADVEEISFNFFHSEDVVRHPVVARIVNAYEAWEEAEQKRKAALAAERKREEQEQK.

Residue 142-149 (GPAGTGKT) participates in ATP binding.

It belongs to the PhoH family.

The protein localises to the cytoplasm. This Escherichia coli O157:H7 protein is PhoH-like protein (ybeZ).